The primary structure comprises 189 residues: MASGAGGSWGRSPPQSAVPTPWVTFLQPLSWAVPPAPPQPGRVKEDLLELMMLQNAQMHQLLLSRLVAGALQPRPASPCPQVYLEVPQEEPEEEEEEMDVREKGPLVFHHHYLPYLMPSPGALLPWPAPFFPTPACQPYLQDVPRIQHCPASREREVRAVPPPPPPSATGTVGADVPPASDYYDAESLL.

A disordered region spans residues 152–189; it reads SREREVRAVPPPPPPSATGTVGADVPPASDYYDAESLL.

This Homo sapiens (Human) protein is Proline-rich protein 29 (PRR29).